A 235-amino-acid polypeptide reads, in one-letter code: Orotidine 5'-phosphate decarboxylase (235 aa).

Substrate-binding positions include Asp12, Lys34, 61–70, Thr116, Arg177, Gln186, and Arg207; that span reads DMKLLDIDNT. The active-site Proton donor is Lys63.

This sequence belongs to the OMP decarboxylase family. Type 1 subfamily. In terms of assembly, homodimer.

The enzyme catalyses orotidine 5'-phosphate + H(+) = UMP + CO2. It functions in the pathway pyrimidine metabolism; UMP biosynthesis via de novo pathway; UMP from orotate: step 2/2. In terms of biological role, catalyzes the decarboxylation of orotidine 5'-monophosphate (OMP) to uridine 5'-monophosphate (UMP). This Rhizobium etli (strain CIAT 652) protein is Orotidine 5'-phosphate decarboxylase.